Reading from the N-terminus, the 674-residue chain is Methionine--tRNA ligase (674 aa).

Residues 11 to 21 carry the 'HIGH' region motif; sequence PYANGDLHLGH. Cysteine 142, cysteine 145, cysteine 155, and cysteine 158 together coordinate Zn(2+). The short motif at 330 to 334 is the 'KMSKS' region element; sequence KMSKS. Residue lysine 333 coordinates ATP. In terms of domain architecture, tRNA-binding spans 574–674; the sequence is DFMKVDLRIA…EGAQPGMRVK (101 aa).

It belongs to the class-I aminoacyl-tRNA synthetase family. MetG type 1 subfamily. As to quaternary structure, homodimer. The cofactor is Zn(2+).

The protein localises to the cytoplasm. The enzyme catalyses tRNA(Met) + L-methionine + ATP = L-methionyl-tRNA(Met) + AMP + diphosphate. In terms of biological role, is required not only for elongation of protein synthesis but also for the initiation of all mRNA translation through initiator tRNA(fMet) aminoacylation. This Francisella tularensis subsp. tularensis (strain FSC 198) protein is Methionine--tRNA ligase.